Reading from the N-terminus, the 313-residue chain is Aspartate carbamoyltransferase catalytic subunit (313 aa).

Carbamoyl phosphate is bound by residues arginine 61 and threonine 62. Lysine 89 lines the L-aspartate pocket. The carbamoyl phosphate site is built by arginine 111, histidine 139, and glutamine 142. Residues arginine 172 and arginine 227 each coordinate L-aspartate. Glycine 268 and proline 269 together coordinate carbamoyl phosphate.

The protein belongs to the aspartate/ornithine carbamoyltransferase superfamily. ATCase family. As to quaternary structure, heterododecamer (2C3:3R2) of six catalytic PyrB chains organized as two trimers (C3), and six regulatory PyrI chains organized as three dimers (R2).

The catalysed reaction is carbamoyl phosphate + L-aspartate = N-carbamoyl-L-aspartate + phosphate + H(+). It functions in the pathway pyrimidine metabolism; UMP biosynthesis via de novo pathway; (S)-dihydroorotate from bicarbonate: step 2/3. Its function is as follows. Catalyzes the condensation of carbamoyl phosphate and aspartate to form carbamoyl aspartate and inorganic phosphate, the committed step in the de novo pyrimidine nucleotide biosynthesis pathway. In Gluconobacter oxydans (strain 621H) (Gluconobacter suboxydans), this protein is Aspartate carbamoyltransferase catalytic subunit.